Consider the following 447-residue polypeptide: Divalent metal cation transporter MntH (447 aa).

11 consecutive transmembrane segments (helical) span residues 26–48 (AGFWKTLMAYSGPGFLIAVGYMD), 65–85 (TLLSVILLSSLIAMLLQAMSA), 108–128 (GFLLWIVAELAIMATDIAEII), 140–160 (IPLIIGILITAADVLILLLLM), 169–189 (AIVATLVAVILIVFAYEVLLS), 212–232 (MLYLSLGIVGATVMPHDLYLG), 264–284 (LFLAFIVNSLLLILGAALFYG), 304–324 (IVGAIASPVLSMLFAVALLAS), 359–379 (VLSVAPVLIFAIYYHGDEAKI), 383–403 (LTFSQVFLSVALPFAVIPLVI), and 426–446 (TATIVLILLNIYLILQTLGLI).

This sequence belongs to the NRAMP family.

It is found in the cell membrane. Its function is as follows. H(+)-stimulated, divalent metal cation uptake system. The polypeptide is Divalent metal cation transporter MntH (Pediococcus pentosaceus (strain ATCC 25745 / CCUG 21536 / LMG 10740 / 183-1w)).